The following is a 469-amino-acid chain: MEKILTVQELNEALKTLIENKQEFKDIYVQGELSNLTFNKSGHIYFSIKEQDAAINCMMWKTNAYKIQSLNLEDGMQIICYGRLTYYIPTGRVSFEVRDIQIHGIGDLQKIFEQRYKELEQKGWFDPNLKKSIPEFVKNVGIITADSGAAIYDLIRTVHRRLPLINIYLFPAQVQGDKAEIDITNKIKQANNFKIDLDVLIVGRGGGSYEDLWAFNELEVLQAIKNSHIPIISAVGHEPDWVLSDYVADIRAATPTAAGELVSKSIIEIKNQLKHYYQNYKTLILNKLDFFNEKINNYKKDQTKYIKDNFSFKYLQLKQLSIDNTKWTKNKIDSVIYKLEDYKHSINNSIIHIINSQNKALKNYLIADEQKILNYLKKQISEFNYTISSFKGHINQILKYEELSFDTLENKLNSLDPLKPLQNGYSIVTNLNHQKIRSYKQVKLNEDLKVILTDSKLTVTIKEVKTNEQ.

The protein belongs to the XseA family. As to quaternary structure, heterooligomer composed of large and small subunits.

Its subcellular location is the cytoplasm. The catalysed reaction is Exonucleolytic cleavage in either 5'- to 3'- or 3'- to 5'-direction to yield nucleoside 5'-phosphates.. In terms of biological role, bidirectionally degrades single-stranded DNA into large acid-insoluble oligonucleotides, which are then degraded further into small acid-soluble oligonucleotides. This chain is Exodeoxyribonuclease 7 large subunit, found in Mycoplasma mycoides subsp. mycoides SC (strain CCUG 32753 / NCTC 10114 / PG1).